Reading from the N-terminus, the 150-residue chain is Urease accessory protein UreE (150 aa).

The protein belongs to the UreE family.

The protein localises to the cytoplasm. Involved in urease metallocenter assembly. Binds nickel. Probably functions as a nickel donor during metallocenter assembly. In Staphylococcus saprophyticus subsp. saprophyticus (strain ATCC 15305 / DSM 20229 / NCIMB 8711 / NCTC 7292 / S-41), this protein is Urease accessory protein UreE.